The primary structure comprises 185 residues: Ribosome-recycling factor (185 aa).

Belongs to the RRF family.

It is found in the cytoplasm. Responsible for the release of ribosomes from messenger RNA at the termination of protein biosynthesis. May increase the efficiency of translation by recycling ribosomes from one round of translation to another. The sequence is that of Ribosome-recycling factor from Shouchella clausii (strain KSM-K16) (Alkalihalobacillus clausii).